A 748-amino-acid chain; its full sequence is Antigen peptide transporter 1 (748 aa).

Residues 1-15 (MASSRCPAPRGCRCL) lie on the Cytoplasmic side of the membrane. The helical transmembrane segment at 16–36 (PGASLAWLGTVLLFLADWVLL) threads the bilayer. Residues 37–53 (RTALPRIFSLLVPTALP) lie on the Lumenal side of the membrane. The chain crosses the membrane as a helical span at residues 54 to 76 (LLRVWAVGLSRWAVLWLGACGVL). Topologically, residues 77–92 (RATVGSKSENAGAQGW) are cytoplasmic. A helical membrane pass occupies residues 93–113 (LAALEPLAAALGLALPGLALF). Residues 114 to 133 (RELISWGAPGSADSTRLLHW) are Lumenal-facing. A helical membrane pass occupies residues 134 to 154 (GSHPSAFVVSYAAALPAAALW). At 155-186 (HKLGSLWVPGGQGGSGNPVRRLLGCLGSETRR) the chain is on the cytoplasmic side. The helical transmembrane segment at 187-207 (LSLFLVLVVLSSLGEMAIPFF) threads the bilayer. Positions 187-470 (LSLFLVLVVL…LLSIYPRVQK (284 aa)) constitute an ABC transmembrane type-1 domain. The Lumenal segment spans residues 208-227 (TGRLTDWILQDGSADTFTRN). The helical transmembrane segment at 228–248 (LTLMSILTIASAVLEFVGDGI) threads the bilayer. Over 249–298 (YNNTMGHVHSHLQGEVFGAVLRQETEFFQQNQTGNITSRVTEDTSTLSDS) the chain is Cytoplasmic. A helical transmembrane segment spans residues 299–319 (LSENLSLFLWYLVRGLCLLGI). The Lumenal segment spans residues 320-328 (MLWGSVSLT). A helical transmembrane segment spans residues 329–349 (MVTLVTLPLLFLLPKKVGKWY). Residues 350 to 418 (QLLEVQVRES…AVNSWTTSIS (69 aa)) are Cytoplasmic-facing. The interval 375–420 (PTVRSFANEEGEAQKFREKLQEIKTLNQKEAVAYAVNSWTTSISGM) is part of the peptide-binding site. The helical transmembrane segment at 419 to 439 (GMLLKVGILYIGGQLVTSGAV) threads the bilayer. At 440–443 (SSGN) the chain is on the lumenal side. A helical transmembrane segment spans residues 444–464 (LVTFVLYQMQFTQAVEVLLSI). Positions 453–487 (QFTQAVEVLLSIYPRVQKAVGSSEKIFEYLDRTPR) are part of the peptide-binding site. The Cytoplasmic segment spans residues 465–748 (YPRVQKAVGS…MVQAPADAPE (284 aa)). Residues 503–742 (VQFQDVSFAY…KGCYWAMVQA (240 aa)) enclose the ABC transporter domain. ATP-binding positions include 538-546 (GPNGSGKST), 641-647 (SQLSGGQ), and Gln-701. Ser-545 lines the Mg(2+) pocket.

The protein belongs to the ABC transporter superfamily. ABCB family. MHC peptide exporter (TC 3.A.1.209) subfamily. In terms of assembly, heterodimer of TAP1 and TAP2 (TAP1-TAP2). A component of the peptide loading complex (PLC), interacts via TAPBP with MHCI heterodimer; this interaction mediates peptide-MHCI assembly. Interacts with PSMB5 and PSMB8. The cofactor is Mg(2+).

Its subcellular location is the endoplasmic reticulum membrane. The catalysed reaction is a peptide antigen(in) + ATP + H2O = a peptide antigen(out) + ADP + phosphate + H(+). In terms of biological role, ABC transporter associated with antigen processing. In complex with TAP2 mediates unidirectional translocation of peptide antigens from cytosol to endoplasmic reticulum (ER) for loading onto MHC class I (MHCI) molecules. Uses the chemical energy of ATP to export peptides against the concentration gradient. During the transport cycle alternates between 'inward-facing' state with peptide binding site facing the cytosol to 'outward-facing' state with peptide binding site facing the ER lumen. Peptide antigen binding to ATP-loaded TAP1-TAP2 induces a switch to hydrolysis-competent 'outward-facing' conformation ready for peptide loading onto nascent MHCI molecules. Subsequently ATP hydrolysis resets the transporter to the 'inward facing' state for a new cycle. As a component of the peptide loading complex (PLC), acts as a molecular scaffold essential for peptide-MHCI assembly and antigen presentation. The protein is Antigen peptide transporter 1 (TAP1) of Gorilla gorilla gorilla (Western lowland gorilla).